The primary structure comprises 305 residues: Tyrosine recombinase XerC (305 aa).

In terms of domain architecture, Core-binding (CB) spans 1-93; it reads MVLDGFAAHF…SWRQYCVWLV (93 aa). The 181-residue stretch at 114 to 294 folds into the Tyr recombinase domain; that stretch reads RVPKALPQEW…DFDHIARLYD (181 aa). Catalysis depends on residues Arg155, Lys179, His246, Arg249, and His272. Tyr281 (O-(3'-phospho-DNA)-tyrosine intermediate) is an active-site residue.

It belongs to the 'phage' integrase family. XerC subfamily. In terms of assembly, forms a cyclic heterotetrameric complex composed of two molecules of XerC and two molecules of XerD.

It is found in the cytoplasm. Its function is as follows. Site-specific tyrosine recombinase, which acts by catalyzing the cutting and rejoining of the recombining DNA molecules. The XerC-XerD complex is essential to convert dimers of the bacterial chromosome into monomers to permit their segregation at cell division. It also contributes to the segregational stability of plasmids. In Neisseria meningitidis serogroup C (strain 053442), this protein is Tyrosine recombinase XerC.